The chain runs to 275 residues: HUWE1-associated protein modifying stress responses (275 aa).

Residues 32 to 44 are compositionally biased toward acidic residues; that stretch reads AEQDEQLSPELQE. 4 disordered regions span residues 32 to 51, 155 to 181, 204 to 228, and 250 to 275; these read AEQDEQLSPELQEEAAAAAQ, RNSRAPPRLTVVSPNRATSTETSSSVE, SVRSSTPGSPTHVSSGPNASRRRNG, and GTRKRTSAQCGDVITDSPTHKRNRML. Ser-167 carries the phosphoserine modification. Residues 172–181 show a composition bias toward low complexity; it reads TSTETSSSVE. Residues 204–221 are compositionally biased toward polar residues; it reads SVRSSTPGSPTHVSSGPN. Ser-212 bears the Phosphoserine mark.

It belongs to the HAPSTR1 family. In terms of assembly, homooligomer. Heterooligomer with HAPSTR2; the interaction is direct and stabilizes HAPSTR1. Interacts with HUWE1. Ubiquitinated by HUWE1. Promotes HAPSTR1 degradation through polyubiquitination.

It is found in the nucleus. It localises to the cytoplasm. Functionally, acts as a central player within a network of stress response pathways promoting cellular adaptability. The E3 ligase HUWE1 assists HAPSTR1 in controlling stress signaling and in turn, HUWE1 feeds back to promote the degradation of HAPSTR1. HAPSTR1 represents a central coordination mechanism for stress response programs. Functions as a negative regulator of TP53/P53 in the cellular response to telomere erosion and probably also DNA damage. May attenuate p53/TP53 activation through the E3 ubiquitin ligase HUWE1. The sequence is that of HUWE1-associated protein modifying stress responses from Mus musculus (Mouse).